A 112-amino-acid polypeptide reads, in one-letter code: Protein F-112 (112 aa).

In terms of biological role, essential for virus function. This is Protein F-112 from Saccharolobus solfataricus (Sulfolobus solfataricus).